The chain runs to 203 residues: Small ribosomal subunit protein uS4 (203 aa).

The S4 RNA-binding domain maps to 93 to 156 (RRLDNVVYRL…LKVPAILEAV (64 aa)).

It belongs to the universal ribosomal protein uS4 family. As to quaternary structure, part of the 30S ribosomal subunit. Contacts protein S5. The interaction surface between S4 and S5 is involved in control of translational fidelity.

Functionally, one of the primary rRNA binding proteins, it binds directly to 16S rRNA where it nucleates assembly of the body of the 30S subunit. Its function is as follows. With S5 and S12 plays an important role in translational accuracy. The polypeptide is Small ribosomal subunit protein uS4 (Streptococcus pneumoniae serotype 2 (strain D39 / NCTC 7466)).